Reading from the N-terminus, the 192-residue chain is dTTP/UTP pyrophosphatase (192 aa).

Asp-72 functions as the Proton acceptor in the catalytic mechanism.

It belongs to the Maf family. YhdE subfamily. Requires a divalent metal cation as cofactor.

It is found in the cytoplasm. It catalyses the reaction dTTP + H2O = dTMP + diphosphate + H(+). The catalysed reaction is UTP + H2O = UMP + diphosphate + H(+). In terms of biological role, nucleoside triphosphate pyrophosphatase that hydrolyzes dTTP and UTP. May have a dual role in cell division arrest and in preventing the incorporation of modified nucleotides into cellular nucleic acids. The chain is dTTP/UTP pyrophosphatase from Geobacter metallireducens (strain ATCC 53774 / DSM 7210 / GS-15).